Consider the following 329-residue polypeptide: MPEPGPRMNGFSLGELCWLFCCPPCPSRIAAKLAFLPPEPTYTVLAPEQRGPGAPAPASAASTSSASAAAQPAPQQPEEGGAGPGACSLHLSERADWQYSQRELDAVEVFFSRTARDNRLGCMFVRCAPSSRYTLLFSHGNAVDLGQMCSFYIGLGSRINCNIFSYDYSGYGVSSGKPSEKNLYADIDAAWQALRTRYGVSPENIILYGQSIGTVPTVDLASRYECAAVILHSPLMSGLRVAFPDTRKTYCFDAFPSIDKISKVTSPVLVIHGTEDEVIDFSHGLAMYERCPRAVEPLWVEGAGHNDIELYAQYLERLKQFISHELPNS.

The disordered stretch occupies residues 46 to 85 (APEQRGPGAPAPASAASTSSASAAAQPAPQQPEEGGAGPG). Over residues 51–79 (GPGAPAPASAASTSSASAAAQPAPQQPEE) the composition is skewed to low complexity. Catalysis depends on charge relay system residues Ser211, Asp276, and His305.

It belongs to the AB hydrolase superfamily. ABHD17 family. Palmitoylated on cysteine residues located in a cysteine cluster at the N-terminus which promotes membrane localization. Palmitoylation is required for post-synaptic localization and for depalmitoylating activity towards DLG4/PSD95.

It localises to the recycling endosome membrane. The protein resides in the cell projection. Its subcellular location is the dendritic spine. It is found in the postsynaptic density membrane. The catalysed reaction is S-hexadecanoyl-L-cysteinyl-[protein] + H2O = L-cysteinyl-[protein] + hexadecanoate + H(+). Hydrolyzes fatty acids from S-acylated cysteine residues in proteins. Has depalmitoylating activity towards NRAS and DLG4/PSD95. This chain is Alpha/beta hydrolase domain-containing protein 17C, found in Bos taurus (Bovine).